Consider the following 442-residue polypeptide: Interferon-related developmental regulator 2 (442 aa).

Basic residues predominate over residues 1–15; sequence MPRARKGNTLRKGGQ. The tract at residues 1-71 is disordered; sequence MPRARKGNTL…DVVDEQGQQE (71 aa). A compositionally biased stretch (polar residues) spans 43-56; sequence TASECPSLLSTTAE.

This sequence belongs to the IFRD family. Associates with ribosomes; promoting ribosome inactivation. Expressed in many tissues including heart, brain, placenta, lung, liver, skeletal muscle, kidney and pancreas.

Its function is as follows. Ribosome-binding protein that acts as an inhibitor of mRNA translation by promoting ribosome inactivation. Associates with the P- and E-sites of the ribosome and inserts a C-terminal helix into the mRNA exit channel to preclude translation. In Homo sapiens (Human), this protein is Interferon-related developmental regulator 2.